We begin with the raw amino-acid sequence, 195 residues long: Protein Nef (195 aa).

Residue glycine 2 is the site of N-myristoyl glycine; by host attachment. The interval 2-53 (GNIFGRWPGARKAIEDLHNTSSEPVGQASQDLQNKGGLTTNTLGTSADVLEY) is N-terminal; associates with the host plasma membrane. Positions 7–22 (RWPGARKAIEDLHNTS) are necessary for MHC-I internalization. Residues 59–61 (EEE) form an acidic region. Residues 65 to 74 (PVRPAVPMRP) are SH3-binding. The tract at residues 65 to 74 (PVRPAVPMRP) is SH3-binding; interaction with Src family tyrosine kinases. The PxxP signature appears at 68–71 (PAVP). A mediates dimerization region spans residues 104 to 120 (AILDTWMYNTQGVFPDW). The segment at 144–171 (VDPPEDDEKNILLHPACSHGTTDPDGET) is binding to ATP6V1H. Positions 155–156 (LL) match the Di-leucine internalization motif; necessary for CD4 internalization motif.

Belongs to the lentivirus primate group Nef protein family. Homodimer.

It localises to the host cell membrane. The protein resides in the host cytoplasm. Its subcellular location is the host perinuclear region. The protein localises to the virion. It is found in the secreted. Its function is as follows. Factor of infectivity and pathogenicity, required for optimal virus replication. Alters numerous pathways of T-lymphocyte function and down-regulates immunity surface molecules in order to evade host defense and increase viral infectivity. Alters the functionality of other immunity cells, like dendritic cells, monocytes/macrophages and NK cells. One of the earliest and most abundantly expressed viral proteins. In terms of biological role, in infected CD4(+) T-lymphocytes, down-regulates the surface MHC-I, mature MHC-II, CD4, CD28 and probably other immunity surface molecules. In consequence infected cells are masked for immune recognition by cytotoxic T-lymphocytes. Decreasing the number of immune receptors also prevents reinfection by more HIV particles (superinfection). Functionally, bypasses host T-cell signaling by inducing a transcriptional program nearly identical to that of anti-CD3 cell activation. Interaction with TCR-zeta chain up-regulates the Fas ligand (FasL). Increasing surface FasL molecules and decreasing surface MHC-I molecules on infected CD4(+) cells send attacking cytotoxic CD8+ T-lymphocytes into apoptosis. Plays a role in optimizing the host cell environment for viral replication without causing cell death by apoptosis. Protects the infected cells from apoptosis in order to keep them alive until the next virus generation is ready to strike. This Pan troglodytes (Chimpanzee) protein is Protein Nef.